Here is a 334-residue protein sequence, read N- to C-terminus: Mediator of RNA polymerase II transcription subunit 4 (334 aa).

Residues 76-100 (LIRTLKAHVEKRDEVIQQVENNLKA) are a coiled coil. Residues 188–203 (SSAQKPIIASPSASSS) show a composition bias toward low complexity. Disordered regions lie at residues 188–234 (SSAQ…GYGA) and 252–334 (EKQW…GRNK). Polar residues-rich tracts occupy residues 204-225 (NGGT…TNGD) and 264-282 (ATSS…SSPS).

This sequence belongs to the Mediator complex subunit 4 family. As to quaternary structure, component of the Mediator complex.

It is found in the nucleus. In terms of biological role, component of the Mediator complex, a coactivator involved in the regulated transcription of nearly all RNA polymerase II-dependent genes. Mediator functions as a bridge to convey information from gene-specific regulatory proteins to the basal RNA polymerase II transcription machinery. Mediator is recruited to promoters by direct interactions with regulatory proteins and serves as a scaffold for the assembly of a functional preinitiation complex with RNA polymerase II and the general transcription factors. The polypeptide is Mediator of RNA polymerase II transcription subunit 4 (mdt-4) (Caenorhabditis briggsae).